The primary structure comprises 908 residues: Protein translocase subunit SecA (908 aa).

ATP contacts are provided by residues Gln90, 108 to 112, and Asp503; that span reads GEGKT. A compositionally biased stretch (low complexity) spans 846–864; the sequence is AAAAEAPVAPAPQPAAAAP. The disordered stretch occupies residues 846 to 884; the sequence is AAAAEAPVAPAPQPAAAAPQPTPELVGAEAGEPDPAAWG. Cys892, Cys894, Cys903, and His904 together coordinate Zn(2+).

It belongs to the SecA family. In terms of assembly, monomer and homodimer. Part of the essential Sec protein translocation apparatus which comprises SecA, SecYEG and auxiliary proteins SecDF-YajC and YidC. It depends on Zn(2+) as a cofactor.

It is found in the cell inner membrane. Its subcellular location is the cytoplasm. The enzyme catalyses ATP + H2O + cellular proteinSide 1 = ADP + phosphate + cellular proteinSide 2.. In terms of biological role, part of the Sec protein translocase complex. Interacts with the SecYEG preprotein conducting channel. Has a central role in coupling the hydrolysis of ATP to the transfer of proteins into and across the cell membrane, serving both as a receptor for the preprotein-SecB complex and as an ATP-driven molecular motor driving the stepwise translocation of polypeptide chains across the membrane. The protein is Protein translocase subunit SecA of Cereibacter sphaeroides (strain KD131 / KCTC 12085) (Rhodobacter sphaeroides).